The chain runs to 209 residues: Small ribosomal subunit protein uS4 (209 aa).

The 69-residue stretch at 98 to 166 folds into the S4 RNA-binding domain; it reads RRLDNVVYRL…IKQAIELNKG (69 aa).

The protein belongs to the universal ribosomal protein uS4 family. In terms of assembly, part of the 30S ribosomal subunit. Contacts protein S5. The interaction surface between S4 and S5 is involved in control of translational fidelity.

Functionally, one of the primary rRNA binding proteins, it binds directly to 16S rRNA where it nucleates assembly of the body of the 30S subunit. In terms of biological role, with S5 and S12 plays an important role in translational accuracy. The polypeptide is Small ribosomal subunit protein uS4 (Fervidobacterium nodosum (strain ATCC 35602 / DSM 5306 / Rt17-B1)).